An 864-amino-acid polypeptide reads, in one-letter code: Leucine--tRNA ligase (864 aa).

The 'HIGH' region motif lies at 42-52 (PYPSGKLHMGH). Residues 624–628 (KMSKS) carry the 'KMSKS' region motif. Residue Lys627 coordinates ATP.

Belongs to the class-I aminoacyl-tRNA synthetase family.

Its subcellular location is the cytoplasm. It catalyses the reaction tRNA(Leu) + L-leucine + ATP = L-leucyl-tRNA(Leu) + AMP + diphosphate. The protein is Leucine--tRNA ligase of Burkholderia lata (strain ATCC 17760 / DSM 23089 / LMG 22485 / NCIMB 9086 / R18194 / 383).